The sequence spans 78 residues: Alpha-amylase inhibitor Haim-1 (78 aa).

Intrachain disulfides connect Cys11-Cys27 and Cys45-Cys72.

In terms of biological role, inhibits mammalian alpha-amylases specifically but has no action on plant and microbial alpha-amylases. This chain is Alpha-amylase inhibitor Haim-1, found in Streptomyces griseosporeus.